The primary structure comprises 891 residues: Translation initiation factor IF-2 (891 aa).

In terms of domain architecture, tr-type G spans 390–559 (NRAPIVTIMG…LLQSDMLELK (170 aa)). The tract at residues 399 to 406 (GHVDHGKT) is G1. 399-406 (GHVDHGKT) is a binding site for GTP. Residues 424 to 428 (GITQS) form a G2 region. Positions 445–448 (DTPG) are G3. GTP is bound by residues 445–449 (DTPGH) and 499–502 (NKID). The G4 stretch occupies residues 499-502 (NKID). The interval 535 to 537 (SAT) is G5.

This sequence belongs to the TRAFAC class translation factor GTPase superfamily. Classic translation factor GTPase family. IF-2 subfamily.

Its subcellular location is the cytoplasm. One of the essential components for the initiation of protein synthesis. Protects formylmethionyl-tRNA from spontaneous hydrolysis and promotes its binding to the 30S ribosomal subunits. Also involved in the hydrolysis of GTP during the formation of the 70S ribosomal complex. The chain is Translation initiation factor IF-2 from Blochmanniella pennsylvanica (strain BPEN).